We begin with the raw amino-acid sequence, 214 residues long: MARADDPDERKTQGGHGDRRRREFRGGEQVVRAGTLLLAATDLTEPTFRRSVVYIMEHNDSGSLGVVINRPSETSLADVLPRWSALAADPGTLYFGGPVKRDAALCLGTLKVGASTAGVPGLRRIDGRVVLVDLAADPERIAPLVEGIRVFAGYAGWTFGQLEGELDNEDWIVLSALPTDPISAARPDLWADVLRRQPLPMSLLATHPIEVERN.

The disordered stretch occupies residues 1-24 (MARADDPDERKTQGGHGDRRRREF).

It belongs to the UPF0301 (AlgH) family.

This is UPF0301 protein NFA_55110 from Nocardia farcinica (strain IFM 10152).